A 544-amino-acid polypeptide reads, in one-letter code: 4-coumarate--CoA ligase 1 (544 aa).

6 residues coordinate ATP: S190, S191, G192, T193, T194, and K198. A (E)-4-coumaroyl-AMP-binding site is contributed by Y240. Residue K261 participates in CoA binding. Positions D263–Q332 are SBD1. (E)-4-coumaroyl-AMP contacts are provided by A310, Q332, G333, T337, and M345. 3 residues coordinate ATP: Q332, G333, and T337. Positions G333–Y400 are SBD2. ATP contacts are provided by D421 and R436. Residues K438 and K442 each coordinate (E)-4-coumaroyl-AMP. CoA-binding residues include K444 and G445. K527 is a binding site for ATP.

Belongs to the ATP-dependent AMP-binding enzyme family. Requires Mg(2+) as cofactor.

It carries out the reaction (E)-4-coumarate + ATP + CoA = (E)-4-coumaroyl-CoA + AMP + diphosphate. The enzyme catalyses (E)-4-coumarate + ATP + H(+) = (E)-4-coumaroyl-AMP + diphosphate. It catalyses the reaction (E)-4-coumaroyl-AMP + CoA = (E)-4-coumaroyl-CoA + AMP + H(+). The protein operates within phytoalexin biosynthesis; 3,4',5-trihydroxystilbene biosynthesis; 3,4',5-trihydroxystilbene from trans-4-coumarate: step 1/2. In terms of biological role, carboxylate--CoA ligase that may use 4-coumarate as substrate. Follows a two-step reaction mechanism, wherein the carboxylate substrate first undergoes adenylation by ATP, followed by a thioesterification in the presence of CoA to yield the final CoA thioester. The polypeptide is 4-coumarate--CoA ligase 1 (4CL1) (Petroselinum crispum (Parsley)).